A 222-amino-acid chain; its full sequence is Arginine ABC transporter permease protein ArtM (222 aa).

Residues 1-15 (MFEYLPELMKGLHTS) are Periplasmic-facing. Residues 12–208 (LHTSLTLTVA…VVNGLLTLMM (197 aa)) enclose the ABC transmembrane type-1 domain. Residues 16 to 36 (LTLTVASLIVALILALIFTII) traverse the membrane as a helical segment. At 37 to 49 (LTLKTPVLVWLVR) the chain is on the cytoplasmic side. The chain crosses the membrane as a helical span at residues 50-70 (GYITLFTGTPLLVQIFLIYYG). At 71–79 (PGQFPTLQE) the chain is on the periplasmic side. Residues 80 to 100 (YPALWHLLSEPWLCALIALSL) form a helical membrane-spanning segment. The Cytoplasmic segment spans residues 101–154 (NSAAYTTQLFYGAIRAIPEGQWQSCSALGMSKKDTLAILLPYAFKRSLSSYSNE). The helical transmembrane segment at 155 to 175 (VVLVFKSTSLAYTITLMEVMG) threads the bilayer. The Periplasmic segment spans residues 176 to 186 (YSQLLYGRTYD). A helical transmembrane segment spans residues 187-207 (VMVFGAAGIIYLVVNGLLTLM). The Cytoplasmic portion of the chain corresponds to 208–222 (MRLIERKALAFERRN).

This sequence belongs to the binding-protein-dependent transport system permease family. HisMQ subfamily. In terms of assembly, the complex is composed of two ATP-binding proteins (ArtP), two transmembrane proteins (ArtM and ArtQ) and two solute-binding proteins (ArtJ and ArtI).

It is found in the cell inner membrane. Its function is as follows. Part of the ABC transporter complex ArtPIQMJ involved in arginine transport. Probably responsible for the translocation of the substrate across the membrane. In Escherichia coli (strain K12), this protein is Arginine ABC transporter permease protein ArtM (artM).